Consider the following 214-residue polypeptide: Germin-like protein (214 aa).

A signal peptide spans 1-22; it reads MVMMRIFFFLFLLAFPVFTANA. A disulfide bond links Cys28 and Cys44. Residues 58–204 form the Cupin type-1 domain; it reads SGLAKPGNTT…TTCLDEATIK (147 aa). His106, His108, and Glu113 together coordinate Mn(2+).

The protein belongs to the germin family. Oligomer (believed to be a pentamer but probably hexamer). As to expression, cotyledons and leaves.

The protein resides in the secreted. Its subcellular location is the extracellular space. The protein localises to the apoplast. This is Germin-like protein (GLP) from Ipomoea nil (Japanese morning glory).